The chain runs to 390 residues: Chorismate synthase 2 (390 aa).

Residues Arg-39 and Arg-45 each coordinate NADP(+). FMN is bound by residues Arg-132 to Ser-134, Asn-253 to Ala-254, Gly-298, Lys-313 to Thr-317, and Arg-339.

Belongs to the chorismate synthase family. As to quaternary structure, homotetramer. FMNH2 serves as cofactor.

It carries out the reaction 5-O-(1-carboxyvinyl)-3-phosphoshikimate = chorismate + phosphate. It participates in metabolic intermediate biosynthesis; chorismate biosynthesis; chorismate from D-erythrose 4-phosphate and phosphoenolpyruvate: step 7/7. Its function is as follows. Catalyzes the anti-1,4-elimination of the C-3 phosphate and the C-6 proR hydrogen from 5-enolpyruvylshikimate-3-phosphate (EPSP) to yield chorismate, which is the branch point compound that serves as the starting substrate for the three terminal pathways of aromatic amino acid biosynthesis. This reaction introduces a second double bond into the aromatic ring system. This is Chorismate synthase 2 from Bacillus cereus (strain ATCC 10987 / NRS 248).